A 139-amino-acid chain; its full sequence is MGETIRFGISIDETLLESFDKLIDQKGYMNRSEAIRDLIRASLVELKWEAGEEETVGTVTLVYNHHVRDLSDKLTEHQHTHHDQIISALHVHLDAHNCLEVLVVRGKAREVKQIADELIGVKGVKHGKLVMTTTGEELH.

Ni(2+) contacts are provided by His-79, His-90, His-92, and Cys-98.

The protein belongs to the transcriptional regulatory CopG/NikR family. Ni(2+) is required as a cofactor.

Functionally, transcriptional regulator. This Geotalea uraniireducens (strain Rf4) (Geobacter uraniireducens) protein is Putative nickel-responsive regulator.